The sequence spans 273 residues: Putative phosphoenolpyruvate synthase regulatory protein (273 aa).

153 to 160 lines the ADP pocket; the sequence is GVSRSGKT.

Belongs to the pyruvate, phosphate/water dikinase regulatory protein family. PSRP subfamily.

It carries out the reaction [pyruvate, water dikinase] + ADP = [pyruvate, water dikinase]-phosphate + AMP + H(+). It catalyses the reaction [pyruvate, water dikinase]-phosphate + phosphate + H(+) = [pyruvate, water dikinase] + diphosphate. Bifunctional serine/threonine kinase and phosphorylase involved in the regulation of the phosphoenolpyruvate synthase (PEPS) by catalyzing its phosphorylation/dephosphorylation. This Variovorax paradoxus (strain S110) protein is Putative phosphoenolpyruvate synthase regulatory protein.